The following is a 243-amino-acid chain: MHRTKLEQKQPHFDAQKRRKKECKNSNTPFVRPKLELPHGHNKLLLHSCCAPCSGEVMEAIHASGIDFTIYFYNPNIHPLKEYLIRKEENIRFAEKWGIPFIDADYDRQNWFDRAKGMEDEPERGIRCTMCFDMRFEKAAQYAHENGFPVFTSCLGISRWKDMNQINGCGHRAAEKYDDVVYWDYNWRKGGGSQRMIEISKRERFYQQEYCGCVYSLRDTNKWREANGRQKIEIGKLYYSADK.

The segment covering 1–16 (MHRTKLEQKQPHFDAQ) has biased composition (basic and acidic residues). Positions 1-30 (MHRTKLEQKQPHFDAQKRRKKECKNSNTPF) are disordered. The [4Fe-4S] cluster site is built by Cys49, Cys50, Cys128, and Cys131. A disulfide bridge connects residues Cys211 and Cys213.

This sequence belongs to the QueH family.

It carries out the reaction epoxyqueuosine(34) in tRNA + AH2 = queuosine(34) in tRNA + A + H2O. The protein operates within tRNA modification; tRNA-queuosine biosynthesis. Its function is as follows. Catalyzes the conversion of epoxyqueuosine (oQ) to queuosine (Q), which is a hypermodified base found in the wobble positions of tRNA(Asp), tRNA(Asn), tRNA(His) and tRNA(Tyr). The polypeptide is Epoxyqueuosine reductase QueH (Histophilus somni (strain 129Pt) (Haemophilus somnus)).